Reading from the N-terminus, the 878-residue chain is Phosphoenolpyruvate carboxylase (878 aa).

Catalysis depends on residues histidine 137 and lysine 545.

This sequence belongs to the PEPCase type 1 family. Mg(2+) serves as cofactor.

It carries out the reaction oxaloacetate + phosphate = phosphoenolpyruvate + hydrogencarbonate. Its function is as follows. Forms oxaloacetate, a four-carbon dicarboxylic acid source for the tricarboxylic acid cycle. The protein is Phosphoenolpyruvate carboxylase of Photorhabdus laumondii subsp. laumondii (strain DSM 15139 / CIP 105565 / TT01) (Photorhabdus luminescens subsp. laumondii).